Reading from the N-terminus, the 158-residue chain is UPF0758 protein YkfG (158 aa).

Positions 36–158 constitute an MPN domain; it reads AFTSTHAVRE…IYSFAEHGLL (123 aa). Positions 107, 109, and 120 each coordinate Zn(2+). Positions 107 to 120 match the JAMM motif motif; the sequence is HNHPSGETTPSQAD.

It belongs to the UPF0758 family.

This is UPF0758 protein YkfG (ykfG) from Escherichia coli (strain K12).